The sequence spans 367 residues: CCN family member 4 (367 aa).

Positions 1-22 (MRWFLPWTLAAVTAAAASTVLA) are cleaved as a signal peptide. The IGFBP N-terminal domain occupies 45 to 118 (RPQFCKWPCE…RYAIGVCAQV (74 aa)). 4 cysteine pairs are disulfide-bonded: Cys-49/Cys-73, Cys-53/Cys-75, Cys-55/Cys-76, and Cys-62/Cys-79. Asn-86 carries an N-linked (GlcNAc...) asparagine glycan. Intrachain disulfides connect Cys-87/Cys-101 and Cys-93/Cys-115. The VWFC domain occupies 121–186 (VGCVLDGVRY…GHCCEQWVCE (66 aa)). N-linked (GlcNAc...) asparagine glycosylation occurs at Asn-143. Residues 215-260 (NCIAYTSPWSPCSTSCGLGVSTRISNVNAQCWPEQESRLCNLRPCD) enclose the TSP type-1 domain. Cystine bridges form between Cys-273–Cys-310, Cys-290–Cys-324, Cys-301–Cys-340, Cys-304–Cys-342, and Cys-309–Cys-346. The region spanning 273–347 (CLAVYQPEAS…NACFCNLSCR (75 aa)) is the CTCK domain. Asn-284 is a glycosylation site (N-linked (GlcNAc...) asparagine). N-linked (GlcNAc...) asparagine glycosylation occurs at Asn-343.

This sequence belongs to the CCN family. In terms of tissue distribution, expressed in heart, kidney, lung, pancreas, placenta, ovary, small intestine and spleen. Isoform 2 is expressed predominantly in scirrhous gastric carcinoma and, weakly in placenta. Overexpression is associated with several cancers including breast cancer and colon tumors. Isoform 2 is overexpressed in scirrhous gastric carcinoma.

Its subcellular location is the secreted. Downstream regulator in the Wnt/Frizzled-signaling pathway. Associated with cell survival. Attenuates p53-mediated apoptosis in response to DNA damage through activation of AKT kinase. Up-regulates the anti-apoptotic Bcl-X(L) protein. Adheres to skin and melanoma fibroblasts. In vitro binding to skin fibroblasts occurs through the proteoglycans, decorin and biglycan. The sequence is that of CCN family member 4 from Homo sapiens (Human).